Consider the following 621-residue polypeptide: Probable potassium transport system protein Kup 2 (621 aa).

12 consecutive transmembrane segments (helical) span residues 9-29 (MAGLTLAALGVVYGDIGTSPL), 48-68 (IFGILSLIFWSLIFVVSVKYV), 101-121 (IVLLGLFGAALFYGDAIITPA), 136-156 (SGMEAYVLPMAVGVLVGLFLL), 164-184 (VGLMFGPVMMVWFAILGILGL), 210-230 (GFHAFLTLGSVVLALTGAEAL), 246-266 (WFSLVLPGLGLNYFGQGALLM), 275-295 (PFFLLAPDWALLPMIALATLA), 336-356 (IYMPFINWALLVAVLVVVLTF), 364-384 (AAYGIAVTGTMLITTMLFFVV), 393-413 (LPLALGITLLFGVIDTAFFAA), and 418-438 (VADGGWLPLVMGMAIFTLMST).

Belongs to the HAK/KUP transporter (TC 2.A.72) family.

It is found in the cell inner membrane. The enzyme catalyses K(+)(in) + H(+)(in) = K(+)(out) + H(+)(out). Transport of potassium into the cell. Likely operates as a K(+):H(+) symporter. In Chromobacterium violaceum (strain ATCC 12472 / DSM 30191 / JCM 1249 / CCUG 213 / NBRC 12614 / NCIMB 9131 / NCTC 9757 / MK), this protein is Probable potassium transport system protein Kup 2.